The sequence spans 755 residues: MRSVTSFNDSWVFSEASTRDAERSGRVSRSACRTNAVELPFNYFDERCYQRAFTYQRVLAWRPDFSQGSRSSSTRQWPMRSCISTAKRSSRIRDGYTPFEARLTDRLLEGDNLITVKIDGSENPEIPPFGAGIDYLTYAGIYRDVWLKVTDPVSIANIKIETRDVLSDHKAVSLRCDLSNPQGLSFSGTISALLKNAAGEVLAEVAGETTGQSLAFEMDGLRGLSLWDIDDPVLYVIEVELRTGQGFRLLRRAFRLPHGEFTTEGFRLNGRPLKIRGLNRHQSFPYVGLRMGRTAKGSAHADIMNAHRLHCNLVRTSHYPQSKWFLDHCDRIGLLVFARNPRLAAYRWGGMETGGNPERPPHRSSATGTTRLSYIWGVRINESQDSHDFYAETNRLARELDPTRQTGGVRYITDSEFLEDVYTMNDFILGNEELPGANRPGTALRPQQECTGLPRKVPYLITEFGGHMYPTKIYDQEQRQAEHVRRHLEVLNAAYARNPGISGAIGWCMFDYNTTRISAPATGSAITASWTCSASPKFAAYVYASQCDPSEEIVMKPVTFWARGDDDIGGVLPLIVLTNCDEIELKYGSLTKRVGPDRENFPHLPHPPVVIDHRHFTKDELGVWGMKWESAEFTGFIAGKPVADLRMAADPVPTTLQVEADSKTLRREGRDTVRLILRALDQAGNVLPFLNDAVDIEIHGPARLVGPARIVLQGGSGFLAGVHGRRRHASSRSRRRGSAAAKLDLVALADGAASA.

The active-site Proton donor is the glutamate 382. Residue glutamate 463 is the Nucleophile of the active site.

It belongs to the glycosyl hydrolase 2 family.

The enzyme catalyses Hydrolysis of terminal non-reducing beta-D-galactose residues in beta-D-galactosides.. The protein is Beta-galactosidase (lacZ) of Rhizobium meliloti (Ensifer meliloti).